Here is a 286-residue protein sequence, read N- to C-terminus: UPF0725 protein At2g20620 (286 aa).

The disordered stretch occupies residues 1–49 (MVLETPVCSPIDKESSSDDVQLNKPPKKKRKLDVVYPPRDNTSSSSDVK).

Belongs to the UPF0725 (EMB2204) family.

The chain is UPF0725 protein At2g20620 from Arabidopsis thaliana (Mouse-ear cress).